The sequence spans 435 residues: NADH-quinone oxidoreductase subunit D (435 aa).

Belongs to the complex I 49 kDa subunit family. NDH-1 is composed of 14 different subunits. Subunits NuoB, C, D, E, F, and G constitute the peripheral sector of the complex.

The protein resides in the cell inner membrane. The enzyme catalyses a quinone + NADH + 5 H(+)(in) = a quinol + NAD(+) + 4 H(+)(out). NDH-1 shuttles electrons from NADH, via FMN and iron-sulfur (Fe-S) centers, to quinones in the respiratory chain. The immediate electron acceptor for the enzyme in this species is believed to be ubiquinone. Couples the redox reaction to proton translocation (for every two electrons transferred, four hydrogen ions are translocated across the cytoplasmic membrane), and thus conserves the redox energy in a proton gradient. The protein is NADH-quinone oxidoreductase subunit D of Xanthomonas oryzae pv. oryzae (strain MAFF 311018).